A 155-amino-acid polypeptide reads, in one-letter code: MFTIDFSDHTGLVETSWLDQIDQLLTFAKKKENIHNDAELSVTFVDKDEIQNINKVYRDKDKVTDVISFALEEDEPEIDFNDFDIPRVLGDIIICTDVAKEQSESYGHSFERELGFLALHGFLHLLGYDHMNDNDEKEMFGRQDAILNEFGLTRN.

3 residues coordinate Zn(2+): H120, H124, and H130.

Belongs to the endoribonuclease YbeY family. Zn(2+) serves as cofactor.

It is found in the cytoplasm. Its function is as follows. Single strand-specific metallo-endoribonuclease involved in late-stage 70S ribosome quality control and in maturation of the 3' terminus of the 16S rRNA. The sequence is that of Endoribonuclease YbeY from Staphylococcus epidermidis (strain ATCC 35984 / DSM 28319 / BCRC 17069 / CCUG 31568 / BM 3577 / RP62A).